The primary structure comprises 168 residues: 3-isopropylmalate dehydratase small subunit (168 aa).

The protein belongs to the LeuD family. LeuD type 2 subfamily. In terms of assembly, heterodimer of LeuC and LeuD.

The catalysed reaction is (2R,3S)-3-isopropylmalate = (2S)-2-isopropylmalate. Its pathway is amino-acid biosynthesis; L-leucine biosynthesis; L-leucine from 3-methyl-2-oxobutanoate: step 2/4. Functionally, catalyzes the isomerization between 2-isopropylmalate and 3-isopropylmalate, via the formation of 2-isopropylmaleate. The protein is 3-isopropylmalate dehydratase small subunit (leuD) of Sulfurisphaera tokodaii (strain DSM 16993 / JCM 10545 / NBRC 100140 / 7) (Sulfolobus tokodaii).